A 439-amino-acid polypeptide reads, in one-letter code: Forkhead box protein J1-A (439 aa).

A DNA-binding region (fork-head) is located at residues 124–218 (KPPYSYATLI…INGAMKKRRL (95 aa)). A disordered region spans residues 273–293 (EHGWNSISDGKSHKRKQPLPK). Positions 284–293 (SHKRKQPLPK) are enriched in basic residues.

The protein belongs to the FOXJ1 family. As to expression, expressed in two independent areas of stage 10-11 embryos; in the dorsal blastopore lip (Spemann organizer) and shortly after in the ectodermal cells of the animal cap. As development proceeds, cells of the animal cap contribute to the epidermis and show a spotty pattern, which suggests expression in ciliated epidermal cells. Distribution of these cells is uniform in the trunk area of the embryo but more random in the head, being practically absent in the cement gland and olfactory placode. The spotted pattern becomes more dispersed as embryos grow in size. Due to cell movements during gastrulation, expression in the dorsal lip becomes located in the dorsal midline with expression restricted to the neuroectoderm. Expressed transiently in cells of the newly formed neural floor plate in the tail of older tadpoles.

Its subcellular location is the nucleus. In terms of biological role, key transcription factor required for motile ciliogenesis. Activates genes essential for motile cilia formation and function. Required for ciliogenesis in multiciliated cells. This is Forkhead box protein J1-A (foxj1-a) from Xenopus laevis (African clawed frog).